Reading from the N-terminus, the 429-residue chain is Glutamate-1-semialdehyde 2,1-aminomutase (429 aa).

Lys-265 is modified (N6-(pyridoxal phosphate)lysine).

It belongs to the class-III pyridoxal-phosphate-dependent aminotransferase family. HemL subfamily. As to quaternary structure, homodimer. It depends on pyridoxal 5'-phosphate as a cofactor.

It localises to the cytoplasm. It carries out the reaction (S)-4-amino-5-oxopentanoate = 5-aminolevulinate. It functions in the pathway porphyrin-containing compound metabolism; protoporphyrin-IX biosynthesis; 5-aminolevulinate from L-glutamyl-tRNA(Glu): step 2/2. This Shewanella piezotolerans (strain WP3 / JCM 13877) protein is Glutamate-1-semialdehyde 2,1-aminomutase.